The sequence spans 169 residues: Sec-independent protein translocase protein TatB (169 aa).

The helical transmembrane segment at 1–21 (MFDIGFLELAVIAVIGLIVIG) threads the bilayer. Positions 98–169 (EAEEAKLQTP…TTKTEPANDR (72 aa)) are disordered. Over residues 134–143 (PPEEPSKVEA) the composition is skewed to basic and acidic residues. The segment covering 146 to 169 (SAETPQANNQDQQPTTKTEPANDR) has biased composition (polar residues).

The protein belongs to the TatB family. In terms of assembly, the Tat system comprises two distinct complexes: a TatABC complex, containing multiple copies of TatA, TatB and TatC subunits, and a separate TatA complex, containing only TatA subunits. Substrates initially bind to the TatABC complex, which probably triggers association of the separate TatA complex to form the active translocon.

The protein resides in the cell inner membrane. In terms of biological role, part of the twin-arginine translocation (Tat) system that transports large folded proteins containing a characteristic twin-arginine motif in their signal peptide across membranes. Together with TatC, TatB is part of a receptor directly interacting with Tat signal peptides. TatB may form an oligomeric binding site that transiently accommodates folded Tat precursor proteins before their translocation. The polypeptide is Sec-independent protein translocase protein TatB (Saccharophagus degradans (strain 2-40 / ATCC 43961 / DSM 17024)).